Here is a 436-residue protein sequence, read N- to C-terminus: 3-ketoacyl-CoA thiolase (436 aa).

Cys99 acts as the Acyl-thioester intermediate in catalysis. Catalysis depends on proton acceptor residues His392 and Cys422.

The protein belongs to the thiolase-like superfamily. Thiolase family. In terms of assembly, heterotetramer of two alpha chains (FadJ) and two beta chains (FadI).

It is found in the cytoplasm. The catalysed reaction is an acyl-CoA + acetyl-CoA = a 3-oxoacyl-CoA + CoA. It functions in the pathway lipid metabolism; fatty acid beta-oxidation. Its function is as follows. Catalyzes the final step of fatty acid oxidation in which acetyl-CoA is released and the CoA ester of a fatty acid two carbons shorter is formed. This chain is 3-ketoacyl-CoA thiolase, found in Pseudoalteromonas atlantica (strain T6c / ATCC BAA-1087).